Reading from the N-terminus, the 157-residue chain is Myosin essential light chain, striated adductor muscle (157 aa).

EF-hand domains follow at residues 7–44 (DEID…LGIN) and 82–117 (GTFA…LGER).

Its function is as follows. In molluscan muscle, calcium regulation is associated with myosin rather than with actin. Muscle myosin contains two types of light chains: the catalytic light chain, essential for ATPase activity, and the regulatory light chain, a calcium-binding protein responsible for Ca(2+) dependent binding and Ca(2+) dependent Mg-ATPase activity. This Argopecten irradians (Bay scallop) protein is Myosin essential light chain, striated adductor muscle.